The sequence spans 323 residues: Tyrosine recombinase XerD (323 aa).

The Core-binding (CB) domain maps to 21–106; that stretch reads AEDDQAIQRF…TLRGFYALCL (86 aa). The region spanning 127–317 is the Tyr recombinase domain; the sequence is SLPKALTESQ…ARQHLQTLHA (191 aa). Residues R167, K191, H269, R272, and H295 contribute to the active site. Y304 functions as the O-(3'-phospho-DNA)-tyrosine intermediate in the catalytic mechanism.

This sequence belongs to the 'phage' integrase family. XerD subfamily. In terms of assembly, forms a cyclic heterotetrameric complex composed of two molecules of XerC and two molecules of XerD.

The protein resides in the cytoplasm. In terms of biological role, site-specific tyrosine recombinase, which acts by catalyzing the cutting and rejoining of the recombining DNA molecules. The XerC-XerD complex is essential to convert dimers of the bacterial chromosome into monomers to permit their segregation at cell division. It also contributes to the segregational stability of plasmids. This is Tyrosine recombinase XerD from Xanthomonas campestris pv. campestris (strain ATCC 33913 / DSM 3586 / NCPPB 528 / LMG 568 / P 25).